The following is a 104-amino-acid chain: uncharacterized protein (104 aa).

The interval Asn51 to Phe70 is disordered. Positions Asp57–Phe70 are enriched in basic and acidic residues.

The protein belongs to the protein-tyrosine phosphatase family.

This is an uncharacterized protein from Xanthomonas campestris pv. campestris (strain ATCC 33913 / DSM 3586 / NCPPB 528 / LMG 568 / P 25).